We begin with the raw amino-acid sequence, 159 residues long: METAICGRLALAPSSLFNSKSGDKHLVSKGPCVNRSILMTLSTSAALGKGGGVLDKPIIEKTTPGRESEFDLRKSKKIAPPYRVILHNDNFNKREYVVQVLMKVIPGMTVDNAVNIMQEAHINGLAVVIVCAQADAEQHCMQLRGNGLLSSVEPDGGGC.

The N-terminal 44 residues, 1–44 (METAICGRLALAPSSLFNSKSGDKHLVSKGPCVNRSILMTLSTS), are a transit peptide targeting the chloroplast.

This sequence belongs to the ClpS family. In terms of assembly, interacts with CLPC1 (via N-terminus) and CLPC2, but not with CLPt1 or CLPT2. Binds to ClpF; this interaction stimulates their association with ClpC. Expressed exclusively in photosynthetic green tissues with high levels in young, developing leaf tissues.

Its subcellular location is the plastid. It localises to the chloroplast stroma. Small adapter protein that modulate the activity of CLPC. Involved in plastid biogenesis in particular when chloroplast protein synthesis capacity is a limiting factor. Probably involved in substrate selection for plastid Clp protease system. Recruitment to ClpC chaperones is facilitated by CLPF thus forming a binary adapter for selective substrate recognition and delivery to plastid Clp protease system (CLPC). The sequence is that of ATP-dependent Clp protease adapter protein CLPS1, chloroplastic from Arabidopsis thaliana (Mouse-ear cress).